The primary structure comprises 117 residues: Large ribosomal subunit protein bL20 (117 aa).

This sequence belongs to the bacterial ribosomal protein bL20 family.

Functionally, binds directly to 23S ribosomal RNA and is necessary for the in vitro assembly process of the 50S ribosomal subunit. It is not involved in the protein synthesizing functions of that subunit. The polypeptide is Large ribosomal subunit protein bL20 (Leptospira interrogans serogroup Icterohaemorrhagiae serovar copenhageni (strain Fiocruz L1-130)).